We begin with the raw amino-acid sequence, 300 residues long: uncharacterized protein (300 aa).

CBS domains lie at 10–68, 88–148, 152–207, and 226–284; these read RFPP…FRDV, FLKY…HVKV, MTSE…EDVL, and ISSK…GVEI.

This is an uncharacterized protein from Thermofilum pendens.